The following is a 403-amino-acid chain: Homoserine O-succinyltransferase (403 aa).

The disordered stretch occupies residues 1 to 31 (MTELQVDPAASADPAAAADTPRHPAATLPPD). Positions 7 to 26 (DPAASADPAAAADTPRHPAA) are enriched in low complexity. The 310-residue stretch at 74 to 383 (NAVLICHALN…HGHDAFLLED (310 aa)) folds into the AB hydrolase-1 domain. The active-site Nucleophile is S178. R248 is a binding site for substrate. Residues D343 and H376 contribute to the active site. Substrate is bound at residue D377.

It belongs to the AB hydrolase superfamily. MetX family. Homodimer.

The protein localises to the cytoplasm. The catalysed reaction is L-homoserine + succinyl-CoA = O-succinyl-L-homoserine + CoA. It functions in the pathway amino-acid biosynthesis; L-methionine biosynthesis via de novo pathway; O-succinyl-L-homoserine from L-homoserine: step 1/1. Its function is as follows. Transfers a succinyl group from succinyl-CoA to L-homoserine, forming succinyl-L-homoserine. The polypeptide is Homoserine O-succinyltransferase (Ralstonia nicotianae (strain ATCC BAA-1114 / GMI1000) (Ralstonia solanacearum)).